Reading from the N-terminus, the 93-residue chain is Sec-independent protein translocase protein TatA (93 aa).

The chain crosses the membrane as a helical span at residues 1-21 (MGIFDWKHWIVILVVVVLVFG). Residues 43 to 93 (MNDDEKPAEPVVPPAAQPVPPVQPQQSAPLNQPHTIDVQAQKVEEPTRKDS) form a disordered region. Pro residues predominate over residues 52 to 65 (PVVPPAAQPVPPVQ). Residues 84-93 (KVEEPTRKDS) show a composition bias toward basic and acidic residues.

It belongs to the TatA/E family. In terms of assembly, the Tat system comprises two distinct complexes: a TatABC complex, containing multiple copies of TatA, TatB and TatC subunits, and a separate TatA complex, containing only TatA subunits. Substrates initially bind to the TatABC complex, which probably triggers association of the separate TatA complex to form the active translocon.

It localises to the cell inner membrane. Its function is as follows. Part of the twin-arginine translocation (Tat) system that transports large folded proteins containing a characteristic twin-arginine motif in their signal peptide across membranes. TatA could form the protein-conducting channel of the Tat system. The polypeptide is Sec-independent protein translocase protein TatA (Pseudomonas fluorescens (strain ATCC BAA-477 / NRRL B-23932 / Pf-5)).